A 141-amino-acid polypeptide reads, in one-letter code: Large ribosomal subunit protein uL11 (141 aa).

Belongs to the universal ribosomal protein uL11 family. As to quaternary structure, part of the ribosomal stalk of the 50S ribosomal subunit. Interacts with L10 and the large rRNA to form the base of the stalk. L10 forms an elongated spine to which L12 dimers bind in a sequential fashion forming a multimeric L10(L12)X complex. Post-translationally, one or more lysine residues are methylated.

Its function is as follows. Forms part of the ribosomal stalk which helps the ribosome interact with GTP-bound translation factors. The sequence is that of Large ribosomal subunit protein uL11 from Campylobacter jejuni subsp. jejuni serotype O:6 (strain 81116 / NCTC 11828).